The primary structure comprises 332 residues: Fructose-1,6-bisphosphatase class 1 (332 aa).

Residues Glu93, Asp113, Leu115, and Asp116 each contribute to the Mg(2+) site. Substrate is bound by residues 116–119 (DGSS), Asn209, Tyr235, and Lys272. Mg(2+) is bound at residue Glu278.

It belongs to the FBPase class 1 family. Homotetramer. Mg(2+) is required as a cofactor.

Its subcellular location is the cytoplasm. It carries out the reaction beta-D-fructose 1,6-bisphosphate + H2O = beta-D-fructose 6-phosphate + phosphate. The protein operates within carbohydrate biosynthesis; gluconeogenesis. This chain is Fructose-1,6-bisphosphatase class 1, found in Syntrophus aciditrophicus (strain SB).